Consider the following 215-residue polypeptide: UPF0502 protein YceH (215 aa).

Lys80 is modified (N6-acetyllysine).

Belongs to the UPF0502 family.

The polypeptide is UPF0502 protein YceH (Shigella boydii serotype 4 (strain Sb227)).